A 553-amino-acid chain; its full sequence is Solute carrier family 22 member 4 (553 aa).

The Cytoplasmic portion of the chain corresponds to 1-20 (MRDYDEVIAFLGEWGPFQRL). The chain crosses the membrane as a helical span at residues 21–41 (IFFLLSASIIPNGFNGMSVVF). Topologically, residues 42–142 (LAGTPEHRCL…NLVCEDDWKT (101 aa)) are extracellular. N-linked (GlcNAc...) asparagine glycosylation is found at Asn57, Asn64, and Asn91. The chain crosses the membrane as a helical span at residues 143–163 (PLTTSLFFVGVLCGSFVSGQL). The Cytoplasmic portion of the chain corresponds to 164-171 (SDRFGRKK). The chain crosses the membrane as a helical span at residues 172–192 (VLFATMAVQTGFSFVQIFSTN). Residues 193–197 (WEMFT) are Extracellular-facing. Residues 198 to 218 (VLFAIVGMGQISNYVVAFILG) form a helical membrane-spanning segment. ATP is bound at residue 218–225 (GTEILSKS). Residues 219–232 (TEILSKSVRIIFST) are Cytoplasmic-facing. Residues 233-253 (LGVCTFFAIGYMVLPLFAYFI) form a helical membrane-spanning segment. Residues 254 to 257 (RDWR) are Extracellular-facing. A helical membrane pass occupies residues 258–278 (MLLLALTLPGLFCVPLWWFIP). Over 279-339 (ESPRWLISQR…IILDLFRTRN (61 aa)) the chain is Cytoplasmic. The helical transmembrane segment at 340 to 360 (IATITVMAVMLWMLTSVGYFA) threads the bilayer. The Extracellular segment spans residues 361-373 (LSLNVPNLHGDVY). Residues 374–394 (LNCFLSGLIEVPAYFTAWLLL) traverse the membrane as a helical segment. At 395–400 (RTLPRR) the chain is on the cytoplasmic side. The chain crosses the membrane as a helical span at residues 401-421 (YIIAGVLFWGGGVLLLIQVVP). The Extracellular portion of the chain corresponds to 422–428 (EDYNFVS). A helical membrane pass occupies residues 429–449 (IGLVMLGKFGITSAFSMLYVF). Residues 450 to 462 (TAELYPTLVRNMA) lie on the Cytoplasmic side of the membrane. Residues 463–483 (VGITSMASRVGSIIAPYFVYL) traverse the membrane as a helical segment. Residues 484 to 488 (GAYNR) are Extracellular-facing. A helical membrane pass occupies residues 489-509 (LLPYILMGSLTVLIGIITLFF). At 510–553 (PESFGVTLPENLEQMQKVRGFRCGKKSTVSVDREESPKVLITAF) the chain is on the cytoplasmic side.

It belongs to the major facilitator (TC 2.A.1) superfamily. Organic cation transporter (TC 2.A.1.19) family. As to quaternary structure, interacts with PDZK1. As to expression, expressed in kidney. Expressed in small intestines. Expressed in liver in non-parenchymal liver tissue such as sinusoidal vessels. Weakly expressed in lung and brain. Expressed in testis and spleen. Expressed in heart.

It is found in the apical cell membrane. Its subcellular location is the mitochondrion membrane. The protein localises to the basal cell membrane. The enzyme catalyses ergothioneine(out) + Na(+)(out) = ergothioneine(in) + Na(+)(in). It carries out the reaction acetylcholine(in) = acetylcholine(out). It catalyses the reaction (R)-carnitine(out) + Na(+)(out) = (R)-carnitine(in) + Na(+)(in). The catalysed reaction is glycine betaine(out) + Na(+)(out) = glycine betaine(in) + Na(+)(in). Allosterically activated by intracellular ATP. In terms of biological role, transporter that mediates the transport of endogenous and microbial zwitterions and organic cations. Functions as a Na(+)-dependent and pH-dependent high affinity microbial symporter of potent food-derived antioxidant ergothioeine. Transports one sodium ion with one ergothioeine molecule. Involved in the absorption of ergothioneine from the luminal/apical side of the small intestine and renal tubular cells, and into non-parenchymal liver cells, thereby contributing to maintain steady-state ergothioneine level in the body. Also mediates the bidirectional transport of acetycholine, although the exact transport mechanism has not been fully identified yet. Most likely exports anti-inflammatory acetylcholine in non-neuronal tissues, thereby contributing to the non-neuronal cholinergic system. Displays a general physiological role linked to better survival by controlling inflammation and oxidative stress, which may be related to ergothioneine and acetycholine transports. May also function as a low-affinity Na(+)-dependent transporter of L-carnitine through the mitochondrial membrane, thereby maintaining intracellular carnitine homeostasis. May contribute to regulate the transport of cationic compounds in testis across the blood-testis-barrier. This chain is Solute carrier family 22 member 4, found in Mus musculus (Mouse).